The chain runs to 103 residues: UPF0145 protein PBPRB0184 (103 aa).

This sequence belongs to the UPF0145 family.

The sequence is that of UPF0145 protein PBPRB0184 from Photobacterium profundum (strain SS9).